Here is a 97-residue protein sequence, read N- to C-terminus: uncharacterized protein (97 aa).

This sequence belongs to the mycobacterial PE family.

In terms of biological role, part of the ESX-1 / type VII specialized secretion system (T7SS), which exports several proteins including EsxA and EsxB. Plays a role in DNA conjugation, in at least a donor strain. This is an uncharacterized protein from Mycolicibacterium smegmatis (strain ATCC 700084 / mc(2)155) (Mycobacterium smegmatis).